Reading from the N-terminus, the 1518-residue chain is MAAVGSGGYARNDAGEKLPSVMAGVPARRGQSSPPPAPPICLRRRTRLSTASEETVQNRVSLEKVLGITAQNSSGLTCDPGTGHVAYLAGCVVVILDPKENKQQHIFNTARKSLSALAFSPDGKYIVTGENGHRPAVRIWDVEEKNQVAEMLGHKYGVACVAFSPNMKHIVSMGYQHDMVLNVWDWKKDIVVASNKVSCRVIALSFSEDSSYFVTVGNRHVRFWFLEVSTETKVTSTVPLVGRSGILGELHNNIFCGVACGRGRMAGSTFCVSYSGLLCQFNEKRVLEKWINLKVSLSSCLCVSQELIFCGCTDGIVRIFQAHSLHYLANLPKPHYLGVDVAQGLEPSFLFHRKAEAVYPDTVALTFDPIHQWLSCVYKDHSIYIWDVKDINRVGKVWSELFHSSYVWNVEVYPEFEDQRACLPSGSFLTCSSDNTIRFWNLDSSPDSHWQKNIFSNTLLKVVYVENDIQHLQDMSHFPDRGSENGTPMDVKAGVRVMQVSPDGQHLASGDRSGNLRIHELHFMDELVKVEAHDAEVLCLEYSKPETGLTLLASASRDRLIHVLNVEKNYNLEQTLDDHSSSITAIKFAGNRDIQMISCGADKSIYFRSAQQGSDGLHFVRTHHVAEKTTLYDMDIDITQKYVAVACQDRNVRVYNTVNGKQKKCYKGSQGDEGSLLKVHVDPSGTFLATSCSDKSISVIDFYSGECIAKMFGHSEIITSMKFTYDCHHLITVSGDSCVFIWHLGPEITNCMKQHLLEIDHRQQQQHTNDKKRSGHPRQDTYVSTPSEIHSLSPGEQTEDDLEEECEPEEMLKTPSKDSLDPDPRCLLTNGKLPLWAKRLLGDDDVADGLAFHAKRSYQPHGRWAERAGQEPLKTILDAQDLDCYFTPMKPESLENSILDSLEPQSLASLLSESESPQEAGRGHPSFLPQQKESSEASELILYSLEAEVTVTGTDSQYCRKEVEAGPGDQQGDSYLRVSSDSPKDQSPPEDSGESEADLECSFAAIHSPAPPPDPAPRFATSLPHFPGCAGPTEDELSLPEGPSVPSSSLPQTPEQEKFLRHHFETLTESPCRALGDVEASEAEDHFFNPRLSISTQFLSSLQKASRFTHTFPPRATQCLVKSPEVKLMDRGGSQPRAGTGYASPDRTHVLAAGKAEETLEAWRPPPPCLTSLASCVPASSVLPTDRNLPTPTSAPTPGLAQGVHAPSTCSYMEATASSRARISRSISLGDSEGPIVATLAQPLRRPSSVGELASLGQELQAITTATTPSLDSEGQEPALRSWGNHEARANLRLTLSSACDGLLQPPVDTQPGVTVPAVSFPAPSPVEESALRLHGSAFRPSLPAPESPGLPAHPSNPQLPEARPGIPGGTASLLEPTSGALGLLQGSPARWSEPWVPVEALPPSPLELSRVGNILHRLQTTFQEALDLYRVLVSSGQVDTGQQQARTELVSTFLWIHSQLEAECLVGTSVAPAQALPSPGPPSPPTLYPLASPDLQALLEHYSELLVQAVRRKARGH.

Ala-2 carries the N-acetylalanine modification. Ser-33 carries the phosphoserine modification. A Phosphothreonine modification is found at Thr-46. Ser-49 carries the phosphoserine modification. Position 50 is a phosphothreonine (Thr-50). A Phosphoserine modification is found at Ser-52. WD repeat units follow at residues 109–150 (TARK…QVAE), 153–194 (GHKY…VVAS), 196–234 (KVSCRVIALSFSEDSSYFVTVGNRHVRFWFLEVSTETKV), 291–330 (INLKVSLSSCLCVSQELIFCGCTDGIVRIFQAHSLHYLAN), 357–396 (AVYPDTVALTFDPIHQWLSCVYKDHSIYIWDVKDINRVGK), 402–450 (FHSS…DSHW), 490–529 (DVKAGVRVMQVSPDGQHLASGDRSGNLRIHELHFMDELVK), 532–574 (AHDA…NLEQ), 578–618 (DHSS…DGLH), 626–665 (AEKTTLYDMDIDITQKYVAVACQDRNVRVYNTVNGKQKKC), 671–713 (GDEG…KMFG), and 714–752 (HSEIITSMKFTYDCHHLITVSGDSCVFIWHLGPEITNCM). The residue at position 501 (Ser-501) is a Phosphoserine. Positions 762–772 (RQQQQHTNDKK) are enriched in basic and acidic residues. Disordered regions lie at residues 762–824 (RQQQ…DPDP) and 908–935 (ASLLSESESPQEAGRGHPSFLPQQKESS). Residues 781-790 (TYVSTPSEIH) are compositionally biased toward polar residues. Residues 797 to 809 (QTEDDLEEECEPE) show a composition bias toward acidic residues. A WD 13 repeat occupies 803-846 (EEECEPEEMLKTPSKDSLDPDPRCLLTNGKLPLWAKRLLGDDDV). The segment covering 810–824 (EMLKTPSKDSLDPDP) has biased composition (basic and acidic residues). Over residues 908-920 (ASLLSESESPQEA) the composition is skewed to low complexity. Ser-944 is modified (phosphoserine). The segment at 962 to 1055 (EVEAGPGDQQ…PSSSLPQTPE (94 aa)) is disordered. Polar residues-rich tracts occupy residues 971 to 981 (QGDSYLRVSSD) and 1045 to 1054 (VPSSSLPQTP). The residue at position 1053 (Thr-1053) is a Phosphothreonine. 8 positions are modified to phosphoserine: Ser-1070, Ser-1093, Ser-1101, Ser-1123, Ser-1144, Ser-1228, Ser-1248, and Ser-1249. One copy of the WD 14 repeat lies at 1132 to 1173 (GGSQPRAGTGYASPDRTHVLAAGKAEETLEAWRPPPPCLTSL). One copy of the WD 15 repeat lies at 1255–1293 (SLGQELQAITTATTPSLDSEGQEPALRSWGNHEARANLR). Residue Thr-1268 is modified to Phosphothreonine. The segment at 1339 to 1377 (FRPSLPAPESPGLPAHPSNPQLPEARPGIPGGTASLLEP) is disordered.

In terms of assembly, can form homodimers (via C-terminus). Interacts (via C-terminus) with MAPKBP1 (via C-terminus). Interacts with CDK5RAP2, CEP152, CEP63 and KIAA0753. CEP63, CDK5RAP2, CEP152, WDR62 are proposed to form a stepwise assembled complex at the centrosome forming a ring near parental centrioles. Present in fetal brain, enriched within the ventricular and subventricular zone (at protein level). In the embryonic brain it is expressed in mitotic neural precursor cells.

It is found in the nucleus. It localises to the cytoplasm. The protein localises to the cytoskeleton. Its subcellular location is the spindle pole. The protein resides in the microtubule organizing center. It is found in the centrosome. It localises to the centriole. Functionally, required for cerebral cortical development. Plays a role in neuronal proliferation and migration. Plays a role in mother-centriole-dependent centriole duplication; the function also seems to involve CEP152, CDK5RAP2 and CEP63 through a stepwise assembled complex at the centrosome that recruits CDK2 required for centriole duplication. The protein is WD repeat-containing protein 62 (WDR62) of Homo sapiens (Human).